The following is a 264-amino-acid chain: Taurine import ATP-binding protein TauB (264 aa).

In terms of domain architecture, ABC transporter spans 4-233; sequence LQLERISAQY…RYAAGESARA (230 aa). 38-45 contributes to the ATP binding site; the sequence is GPSGSGKT.

The protein belongs to the ABC transporter superfamily. Taurine importer (TC 3.A.1.17.1) family. The complex is composed of two ATP-binding proteins (TauB), two transmembrane proteins (TauC) and a solute-binding protein (TauA).

It localises to the cell inner membrane. The catalysed reaction is taurine(out) + ATP + H2O = taurine(in) + ADP + phosphate + H(+). Its function is as follows. Part of the ABC transporter complex TauABC involved in taurine import. Responsible for energy coupling to the transport system. This is Taurine import ATP-binding protein TauB from Pseudomonas fluorescens (strain Pf0-1).